A 748-amino-acid polypeptide reads, in one-letter code: Acyl-coenzyme A oxidase (748 aa).

It belongs to the acyl-CoA oxidase family. Homooctamer. FAD serves as cofactor.

The protein resides in the peroxisome. It carries out the reaction a 2,3-saturated acyl-CoA + O2 = a (2E)-enoyl-CoA + H2O2. The protein operates within lipid metabolism; peroxisomal fatty acid beta-oxidation. The polypeptide is Acyl-coenzyme A oxidase (POX1) (Saccharomyces cerevisiae (strain ATCC 204508 / S288c) (Baker's yeast)).